Consider the following 623-residue polypeptide: AM-toxin biosynthesis protein 12-2 (623 aa).

Positions 110–129 (TIPGTSQAKNTEPDHQASGL) are disordered.

It participates in mycotoxin biosynthesis. Functionally, part of the gene clusters that mediate the biosynthesis of AM-toxins, host-selective toxins (HSTs) causing Alternaria blotch on apple, a worldwide distributed disease. AM-toxins are cyclic depsipeptides containing the 3 residues 2-hydroxy-isovaleric acid (2-HIV), dehydroalanine, L-alanine which are common for all 3 AM-toxins I to III. The fourth precursor is L-alpha-amino-methoxyphenyl-valeric acid (L-Amv) for AM-toxin I, L-alpha-amino-phenyl-valeric acid (L-Apv) for AM-toxin II, and L-alpha-amino-hydroxyphenyl-valeric acid (L-Ahv) for AM-toxin III. AM-toxins have two target sites for affecting susceptible apple cells; they cause invagination of the plasma membrane and electrolyte loss and chloroplast disorganization. The non-ribosomal peptide synthetase AMT1 contains 4 catalytic modules and is responsible for activation of each residue in AM-toxin. The aldo-keto reductase AMT2 catalyzes the conversion of 2-keto-isovaleric acid (2-KIV) to 2-hydroxy-isovaleric acid (2-HIV), one of the precursor residues incorporated by AMT1 during AM-toxin biosynthesis, by reduction of its ketone to an alcohol. The cytochrome P450 monooxygenase AMT3 and the thioesterase AMT4 are also important for AM-toxin production, but their exact function within the AM-toxin biosynthesis are not known yet. Up to 21 proteins (including AMT1 to AMT4) are predicted to be involved in AM-toxin biosynthesis since their expression ishighly up-regulated in AM-toxin-producing cultures. The chain is AM-toxin biosynthesis protein 12-2 from Alternaria alternata (Alternaria rot fungus).